Here is a 355-residue protein sequence, read N- to C-terminus: Alanine racemase (355 aa).

K34 acts as the Proton acceptor; specific for D-alanine in catalysis. K34 carries the post-translational modification N6-(pyridoxal phosphate)lysine. Residue R133 participates in substrate binding. Y249 (proton acceptor; specific for L-alanine) is an active-site residue. M297 is a binding site for substrate.

Belongs to the alanine racemase family. Requires pyridoxal 5'-phosphate as cofactor.

It catalyses the reaction L-alanine = D-alanine. The protein operates within amino-acid biosynthesis; D-alanine biosynthesis; D-alanine from L-alanine: step 1/1. Catalyzes the interconversion of L-alanine and D-alanine. May also act on other amino acids. The sequence is that of Alanine racemase (alr) from Rickettsia rickettsii (strain Sheila Smith).